The sequence spans 121 residues: Putative ankyrin repeat protein L215 (121 aa).

2 ANK repeats span residues 10–40 (QYDSILMYAASNGYDKIVKLILDKVGTSFKE) and 42–71 (IHETILLWAFQNEHYETIQLLIDHGFNKLV).

This is Putative ankyrin repeat protein L215 from Acanthamoeba polyphaga mimivirus (APMV).